The primary structure comprises 371 residues: Spermatogenic leucine zipper protein 1 (371 aa).

Coiled coils occupy residues 96–148 (EVSE…TVQD) and 177–289 (FPHI…QKEE). Position 98 is a phosphoserine (Ser-98). Residues 110–120 (INKELVKKLLA) are helix-loop-helix motif. The basic motif stretch occupies residues 121–188 (SLDLGKKENA…HIQEENIRLR (68 aa)). Position 202 is a phosphoserine (Ser-202). Polar residues predominate over residues 223–240 (KTLKNNGTHSPTQTNNES). Residues 223–246 (KTLKNNGTHSPTQTNNESAKQELE) are disordered. Residues 245–266 (LEEQVKRLKEDTYSLHLIATLL) form a leucine-zipper region.

In terms of processing, phosphorylated by MAPK1/ERK2 and MAPK3/ERK1.

Its subcellular location is the cytoplasm. The protein resides in the nucleus. In terms of biological role, transcription factor that binds to the DNA sequence 5'-CANNTG-3'(E box) and the G-box motif. May play an important role in the regulation of cell proliferation and differentiation during spermatogenesis. The protein is Spermatogenic leucine zipper protein 1 (SPZ1) of Bos taurus (Bovine).